The primary structure comprises 156 residues: Ribosomal RNA large subunit methyltransferase H (156 aa).

S-adenosyl-L-methionine contacts are provided by residues L73, G104, and 123–128 (LSPLTL).

Belongs to the RNA methyltransferase RlmH family. In terms of assembly, homodimer.

The protein localises to the cytoplasm. It carries out the reaction pseudouridine(1915) in 23S rRNA + S-adenosyl-L-methionine = N(3)-methylpseudouridine(1915) in 23S rRNA + S-adenosyl-L-homocysteine + H(+). Specifically methylates the pseudouridine at position 1915 (m3Psi1915) in 23S rRNA. In Pectobacterium carotovorum subsp. carotovorum (strain PC1), this protein is Ribosomal RNA large subunit methyltransferase H.